Consider the following 534-residue polypeptide: Coiled-coil domain-containing protein 183 (534 aa).

3 coiled-coil regions span residues 10–54, 136–209, and 321–406; these read EAQI…NLRR, DATK…DMTV, and RFLA…LLVI.

This Mus musculus (Mouse) protein is Coiled-coil domain-containing protein 183 (Ccdc183).